The sequence spans 428 residues: MGNRHGIMRPRRLASGRSAAAAEEEGEDGEGEPGSYEAACSADPELGTFDTALRRRASRAITAVASGVEVRSLSLGSLREVTGCLLDMNQEVVRVVLACKRDVWRSPDLFDLVEDYFEGSLHTLDFLAALDKSLHRARDSQLVLHLAVQRHHHEPPAAAAASASELYASTLGELRQFKAAGEPFTDEFFAAFQTVYRQQMSMVGKLRRRKRRLDRRLRSVRVWRRVSGIVFLTAFAALLVCSVVAAAIAAPPVAAALAPAASMPVGSAGKWMDSLLKKYQDALHGHKEVVSAMQVGTFIAIKDLDSIRVLVEHLEVQISSMADSVEFAERDEEAVRFGIDEVKKKLELFMKSVDDLGEQADRNNMRLCHILPEYVFFINPANGNGMSESLFEMMNAFHDICRKDIKFKTSHYYLNFLSSSYQVYIAVA.

Basic residues predominate over residues 1 to 14 (MGNRHGIMRPRRLA). A disordered region spans residues 1–40 (MGNRHGIMRPRRLASGRSAAAAEEEGEDGEGEPGSYEAAC). Over residues 22–31 (AEEEGEDGEG) the composition is skewed to acidic residues. 2 helical membrane-spanning segments follow: residues 229 to 249 (IVFL…AAIA) and 252 to 272 (PVAA…GKWM).

Belongs to the UPF0496 family.

It is found in the membrane. The chain is Putative UPF0496 protein 5 from Oryza sativa subsp. indica (Rice).